Consider the following 387-residue polypeptide: Chaperone protein DnaJ (387 aa).

The region spanning 6–70 is the J domain; that stretch reads DYYETLGVSR…QKRAAYDQYG (65 aa). Residues 143-225 form a CR-type zinc finger; the sequence is GKDTKISYDR…CHGTGHEQER (83 aa). Zn(2+) contacts are provided by Cys156, Cys159, Cys173, Cys176, Cys199, Cys202, Cys213, and Cys216. CXXCXGXG motif repeat units lie at residues 156-163, 173-180, 199-206, and 213-220; these read CHTCNGSG, CHKCHGSG, CDVCGGTG, and CPTCHGTG.

Belongs to the DnaJ family. Homodimer. Requires Zn(2+) as cofactor.

It is found in the cytoplasm. Participates actively in the response to hyperosmotic and heat shock by preventing the aggregation of stress-denatured proteins and by disaggregating proteins, also in an autonomous, DnaK-independent fashion. Unfolded proteins bind initially to DnaJ; upon interaction with the DnaJ-bound protein, DnaK hydrolyzes its bound ATP, resulting in the formation of a stable complex. GrpE releases ADP from DnaK; ATP binding to DnaK triggers the release of the substrate protein, thus completing the reaction cycle. Several rounds of ATP-dependent interactions between DnaJ, DnaK and GrpE are required for fully efficient folding. Also involved, together with DnaK and GrpE, in the DNA replication of plasmids through activation of initiation proteins. The chain is Chaperone protein DnaJ from Lacticaseibacillus paracasei (strain ATCC 334 / BCRC 17002 / CCUG 31169 / CIP 107868 / KCTC 3260 / NRRL B-441) (Lactobacillus paracasei).